Consider the following 61-residue polypeptide: Metallothionein (61 aa).

The residue at position 1 (M1) is an N-acetylmethionine. Residues 1-29 (MDPNCSCAAGGSCTCAGSCKCKECKCTSC) are beta. Residues C5, C7, C13, C15, C19, C21, C24, C26, C29, C33, C34, C36, C37, C41, C44, C48, C50, C57, C59, and C60 each contribute to the a divalent metal cation site. The segment at 30-61 (KKSCCSCCPPGCTKCAQGCVCKGASDKCNCCA) is alpha.

Belongs to the metallothionein superfamily. Type 1 family. In terms of assembly, monomer.

Its function is as follows. Metallothioneins have a high content of cysteine residues that bind various heavy metals. The chain is Metallothionein from Balaena mysticetus (Bowhead whale).